The following is a 395-amino-acid chain: Acetate kinase (395 aa).

A Mg(2+)-binding site is contributed by Asn-8. Position 15 (Lys-15) interacts with ATP. Arg-89 lines the substrate pocket. Residue Asp-146 is the Proton donor/acceptor of the active site. ATP is bound by residues 206-210 (HLGNG), 281-283 (DLR), and 329-333 (GIGEN). Glu-382 contacts Mg(2+).

The protein belongs to the acetokinase family. Homodimer. It depends on Mg(2+) as a cofactor. Mn(2+) serves as cofactor.

The protein resides in the cytoplasm. The enzyme catalyses acetate + ATP = acetyl phosphate + ADP. The protein operates within metabolic intermediate biosynthesis; acetyl-CoA biosynthesis; acetyl-CoA from acetate: step 1/2. In terms of biological role, catalyzes the formation of acetyl phosphate from acetate and ATP. Can also catalyze the reverse reaction. The protein is Acetate kinase of Bacillus velezensis (strain DSM 23117 / BGSC 10A6 / LMG 26770 / FZB42) (Bacillus amyloliquefaciens subsp. plantarum).